A 173-amino-acid chain; its full sequence is Shikimate kinase 1 (173 aa).

14–19 (GAGKST) serves as a coordination point for ATP. Residue serine 18 coordinates Mg(2+). Aspartate 36, arginine 60, and glycine 82 together coordinate substrate. Position 120 (arginine 120) interacts with ATP. Position 140 (arginine 140) interacts with substrate. An ATP-binding site is contributed by glutamine 157.

The protein belongs to the shikimate kinase family. Monomer. Requires Mg(2+) as cofactor.

It is found in the cytoplasm. It catalyses the reaction shikimate + ATP = 3-phosphoshikimate + ADP + H(+). Its pathway is metabolic intermediate biosynthesis; chorismate biosynthesis; chorismate from D-erythrose 4-phosphate and phosphoenolpyruvate: step 5/7. In terms of biological role, catalyzes the specific phosphorylation of the 3-hydroxyl group of shikimic acid using ATP as a cosubstrate. The polypeptide is Shikimate kinase 1 (Enterobacter sp. (strain 638)).